We begin with the raw amino-acid sequence, 467 residues long: ATP-dependent protease ATPase subunit HslU (467 aa).

Residues V22 and G64–E69 each bind ATP. A disordered region spans residues Q149–E192. Residues E178 to E192 show a composition bias toward basic and acidic residues. 3 residues coordinate ATP: D280, E345, and R417.

It belongs to the ClpX chaperone family. HslU subfamily. As to quaternary structure, a double ring-shaped homohexamer of HslV is capped on each side by a ring-shaped HslU homohexamer. The assembly of the HslU/HslV complex is dependent on binding of ATP.

The protein resides in the cytoplasm. In terms of biological role, ATPase subunit of a proteasome-like degradation complex; this subunit has chaperone activity. The binding of ATP and its subsequent hydrolysis by HslU are essential for unfolding of protein substrates subsequently hydrolyzed by HslV. HslU recognizes the N-terminal part of its protein substrates and unfolds these before they are guided to HslV for hydrolysis. The polypeptide is ATP-dependent protease ATPase subunit HslU (Staphylococcus aureus (strain Mu3 / ATCC 700698)).